The following is a 335-amino-acid chain: 2-acylglycerol O-acyltransferase 1 (335 aa).

The next 2 membrane-spanning stretches (helical) occupy residues 24 to 44 and 47 to 67; these read WVFS…SLVL and LWLI…TPQA. N77, N125, and N180 each carry an N-linked (GlcNAc...) asparagine glycan.

This sequence belongs to the diacylglycerol acyltransferase family.

The protein resides in the endoplasmic reticulum membrane. It carries out the reaction a 2-acylglycerol + an acyl-CoA = a 1,2-diacylglycerol + CoA. The enzyme catalyses a 2-acylglycerol + an acyl-CoA = a 1,2-diacyl-sn-glycerol + CoA. The catalysed reaction is a 2-acylglycerol + an acyl-CoA = a 2,3-diacyl-sn-glycerol + CoA. It catalyses the reaction a 1-acylglycerol + an acyl-CoA = a 1,2-diacylglycerol + CoA. It carries out the reaction a 1-acylglycerol + an acyl-CoA = a 1,3-diacylglycerol + CoA. The enzyme catalyses a 1-acyl-sn-glycerol + an acyl-CoA = a 1,3-diacyl-sn-glycerol + CoA. The catalysed reaction is a 3-acyl-sn-glycerol + an acyl-CoA = a 1,3-diacyl-sn-glycerol + CoA. It functions in the pathway glycerolipid metabolism; triacylglycerol biosynthesis. Involved in glycerolipid synthesis and lipid metabolism. Catalyzes the formation of diacylglycerol, the precursor of triacylglycerol, by transferring the acyl chain of a fatty acyl-CoA to a monoacylglycerol, mainly at the sn-1 or sn-3 positions. It uses both sn-2-monoacylglycerol (2-acylglycerol) and sn-1-monoacylglycerol (1-acyl-sn-glycerol) equally well as substrates, and uses sn-3-monoacylglycerol (3-acyl-sn-glycerol) with lower efficiency. The chain is 2-acylglycerol O-acyltransferase 1 (mogat1) from Xenopus tropicalis (Western clawed frog).